The primary structure comprises 73 residues: Large ribosomal subunit protein bL31 (73 aa).

Belongs to the bacterial ribosomal protein bL31 family. Type A subfamily. As to quaternary structure, part of the 50S ribosomal subunit.

In terms of biological role, binds the 23S rRNA. The chain is Large ribosomal subunit protein bL31 from Rhizobium johnstonii (strain DSM 114642 / LMG 32736 / 3841) (Rhizobium leguminosarum bv. viciae).